We begin with the raw amino-acid sequence, 263 residues long: MITVNTLQKMKAAGEKIAMLTAYESSFAALMDDAGVEMLLVGDSLGMAVQGRKSTLPVSLRDMCYHTECVARGAKNAMIVSDLPFGAYQQSKEQAFAAAAELMAAGAHMVKLEGGVWMAETTEFLQMRGIPVCAHIGLTPQSVFAFGGYKVQGRGGKAQALLNDAKAHDDAGAAVVLMECVLAELAKKVTETVSCPTIGIGAGADCDGQVLVMHDMLGIFPGKTAKFVKNFMQGHDSVQAAVRAYVAEVKAKTFPAAEHIFAD.

Mg(2+) contacts are provided by Asp-43 and Asp-82. 3-methyl-2-oxobutanoate contacts are provided by residues 43 to 44, Asp-82, and Lys-111; that span reads DS. Glu-113 serves as a coordination point for Mg(2+). The Proton acceptor role is filled by Glu-179.

It belongs to the PanB family. Homodecamer; pentamer of dimers. Mg(2+) serves as cofactor.

Its subcellular location is the cytoplasm. It carries out the reaction 3-methyl-2-oxobutanoate + (6R)-5,10-methylene-5,6,7,8-tetrahydrofolate + H2O = 2-dehydropantoate + (6S)-5,6,7,8-tetrahydrofolate. It functions in the pathway cofactor biosynthesis; (R)-pantothenate biosynthesis; (R)-pantoate from 3-methyl-2-oxobutanoate: step 1/2. Its function is as follows. Catalyzes the reversible reaction in which hydroxymethyl group from 5,10-methylenetetrahydrofolate is transferred onto alpha-ketoisovalerate to form ketopantoate. This is 3-methyl-2-oxobutanoate hydroxymethyltransferase from Neisseria meningitidis serogroup B (strain ATCC BAA-335 / MC58).